A 344-amino-acid polypeptide reads, in one-letter code: Nuclear distribution protein nudE-like 1-B (344 aa).

A coiled-coil region spans residues 26-189; it reads YKKSCHDAQE…ELAVRERTSD (164 aa).

Belongs to the nudE family. Post-translationally, phosphorylated in mitosis.

The protein resides in the cytoplasm. It is found in the cytoskeleton. The protein localises to the microtubule organizing center. Its subcellular location is the centrosome. It localises to the spindle. Its function is as follows. Required for organization of the cellular microtubule array and microtubule anchoring at the centrosome. Positively regulates the activity of the minus-end directed microtubule motor protein dynein. May enhance dynein-mediated microtubule sliding by targeting dynein to the microtubule plus end. The protein is Nuclear distribution protein nudE-like 1-B (ndel1b) of Danio rerio (Zebrafish).